Here is a 540-residue protein sequence, read N- to C-terminus: Chaperonin GroEL (540 aa).

Residues 29–32, 86–90, G413, and D493 each bind ATP; these read TLGP and DGTTT. A disordered region spans residues 520-540; sequence AEKPEPKPAPGPADPGAGMDF.

This sequence belongs to the chaperonin (HSP60) family. As to quaternary structure, forms a cylinder of 14 subunits composed of two heptameric rings stacked back-to-back. Interacts with the co-chaperonin GroES.

The protein resides in the cytoplasm. It carries out the reaction ATP + H2O + a folded polypeptide = ADP + phosphate + an unfolded polypeptide.. Functionally, together with its co-chaperonin GroES, plays an essential role in assisting protein folding. The GroEL-GroES system forms a nano-cage that allows encapsulation of the non-native substrate proteins and provides a physical environment optimized to promote and accelerate protein folding. This chain is Chaperonin GroEL, found in Tropheryma whipplei (Whipple's bacillus).